Reading from the N-terminus, the 40-residue chain is LVSMVDERAVAWRAHAMGNPVNLPWKLAAANLVPTSTAQK.

In Pinus strobus (Eastern white pine), this protein is Putative NAD(P)-dependent glyceraldehyde-3-phosphate dehydrogenase PS5.